The following is a 268-amino-acid chain: Hydroxyacylglutathione hydrolase (268 aa).

Positions 56, 58, 60, 61, 112, 137, and 176 each coordinate Zn(2+). Substrate is bound at residue 176 to 178 (HEY).

Belongs to the metallo-beta-lactamase superfamily. Glyoxalase II family. In terms of assembly, monomer. Requires Zn(2+) as cofactor.

The catalysed reaction is an S-(2-hydroxyacyl)glutathione + H2O = a 2-hydroxy carboxylate + glutathione + H(+). It participates in secondary metabolite metabolism; methylglyoxal degradation; (R)-lactate from methylglyoxal: step 2/2. In terms of biological role, thiolesterase that catalyzes the hydrolysis of S-D-lactoyl-glutathione to form glutathione and D-lactic acid. The sequence is that of Hydroxyacylglutathione hydrolase (hagh) from Dictyostelium discoideum (Social amoeba).